Consider the following 642-residue polypeptide: Chaperone protein DnaK (642 aa).

The residue at position 199 (threonine 199) is a Phosphothreonine; by autocatalysis. Over residues 570–585 the composition is skewed to basic and acidic residues; the sequence is EELEQASKDGDKEAID. The tract at residues 570 to 642 is disordered; that stretch reads EELEQASKDG…FEEVKDDDKK (73 aa). A compositionally biased stretch (low complexity) spans 600–620; sequence EAAQQQQAQQGAEGAAGGEQQ. Residues 627–642 show a composition bias toward acidic residues; that stretch reads DVVDAEFEEVKDDDKK.

Belongs to the heat shock protein 70 family.

Acts as a chaperone. The sequence is that of Chaperone protein DnaK from Idiomarina loihiensis (strain ATCC BAA-735 / DSM 15497 / L2-TR).